The sequence spans 544 residues: MSAKDIKFGSEARNLMLDGVNMLANAVKVTLGPKGRNVVLDKSFGGPTITKDGVSVAQEITLEGKFENMGAQMVKEVASKTNDIAGDGTTTATVLAQALVIEGVKSVAAGMNPMDLKRGIDKATETAVNALREFSQPCNDTKAIAQVGTISANSDISVGDIIADAMEKVGQAGVITVEEGSGFENELDVVEGMQFDRGYLSPYFVNNQESMTANLETPFVLLHDGKISNIRDLLPTLEAVQKSGKALLIIAEDIDGEALATLVVNNMRGIVKVAAVKAPGFGDRRKAILEDIAVLTGGMVISEEVGLSLEKVTEEHLGTAKRIEIGKENTVIVDGAGKKVDIDGRIAQIKAQIETTTSDYDKEKLLERLAKLSGGVAVIKVGAATEVEMKEKKGRVDDALHATRAAVEEGVVPGGGVALVRVIKALDGLTGDNHDQNIGIDIAKRAMEAPLRQIVTNGGGEASVILNEVAKGKDNYGYNAATEKYGDMLKMGILDPTKVVRAALQHAASISGLMITTEAMITDTPQDTPATAAAPDMGGMGGMM.

Residues 30-33 (TLGP), Lys-51, 87-91 (DGTTT), Gly-415, 479-481 (NAA), and Asp-495 each bind ATP. Low complexity predominate over residues 525 to 537 (PQDTPATAAAPDM). Residues 525 to 544 (PQDTPATAAAPDMGGMGGMM) are disordered.

The protein belongs to the chaperonin (HSP60) family. In terms of assembly, forms a cylinder of 14 subunits composed of two heptameric rings stacked back-to-back. Interacts with the co-chaperonin GroES.

The protein resides in the cytoplasm. It catalyses the reaction ATP + H2O + a folded polypeptide = ADP + phosphate + an unfolded polypeptide.. In terms of biological role, together with its co-chaperonin GroES, plays an essential role in assisting protein folding. The GroEL-GroES system forms a nano-cage that allows encapsulation of the non-native substrate proteins and provides a physical environment optimized to promote and accelerate protein folding. The chain is Chaperonin GroEL from Ruthia magnifica subsp. Calyptogena magnifica.